The following is a 163-amino-acid chain: Nucleotide-binding protein Cj0374 (163 aa).

The protein belongs to the YajQ family.

In terms of biological role, nucleotide-binding protein. The protein is Nucleotide-binding protein Cj0374 of Campylobacter jejuni subsp. jejuni serotype O:2 (strain ATCC 700819 / NCTC 11168).